A 399-amino-acid polypeptide reads, in one-letter code: L-methionine gamma-lyase (399 aa).

Pyridoxal 5'-phosphate-binding positions include 59-61 (YTR) and 89-90 (GM). Substrate is bound at residue Tyr114. 209–211 (SAT) lines the pyridoxal 5'-phosphate pocket. At Lys212 the chain carries N6-(pyridoxal phosphate)lysine. Arg376 contributes to the substrate binding site.

It belongs to the trans-sulfuration enzymes family. L-methionine gamma-lyase subfamily. Homotetramer; dimer of active dimers. Pyridoxal 5'-phosphate is required as a cofactor.

The enzyme catalyses L-methionine + H2O = methanethiol + 2-oxobutanoate + NH4(+). Its function is as follows. Catalyzes the alpha,gamma-elimination of L-methionine to produce methanethiol, 2-oxobutanoate and ammonia. The polypeptide is L-methionine gamma-lyase (Pseudomonas deceptionensis).